The primary structure comprises 741 residues: Oosporein cluster regulator OpS3 (741 aa).

Residues 16-39 are disordered; it reads GRPARGQSTTTRSRNTQQSAPTSQ. A compositionally biased stretch (low complexity) spans 20–34; sequence RGQSTTTRSRNTQQS. Positions 44–69 form a DNA-binding region, zn(2)-C6 fungal-type; it reads CRRCRQHRIKCSEKPCEPCRANNSKC. The disordered stretch occupies residues 139-167; it reads HPNTPNSCPSQSGDIRQQQIPCSQHASPA. A coiled-coil region spans residues 473-500; sequence TAGQSMARLSETIRQLETALDELPEQLL. Positions 501-528 are disordered; the sequence is TRHGSRTPTNNGQTHRSRPTCSTMPHTN. Residues 506–528 show a composition bias toward polar residues; that stretch reads RTPTNNGQTHRSRPTCSTMPHTN.

The protein resides in the nucleus. Its function is as follows. Transcription factor involved in regulation of gene cluster that mediates the biosynthesis of oosporein, a metabolite required for fungal virulence that acts by evading host immunity to facilitate fungal multiplication in insects. Binds oosporein cluster genes at a conserved 5'-CGGA-3' motif with the exception of OpS5. The presence of this motif in the OpS3 promoter would suggest the formation of a positive feedback loop for self-activation. The chain is Oosporein cluster regulator OpS3 from Beauveria bassiana (strain ARSEF 2860) (White muscardine disease fungus).